The primary structure comprises 142 residues: Large ribosomal subunit protein uL13 (142 aa).

This sequence belongs to the universal ribosomal protein uL13 family. In terms of assembly, part of the 50S ribosomal subunit.

This protein is one of the early assembly proteins of the 50S ribosomal subunit, although it is not seen to bind rRNA by itself. It is important during the early stages of 50S assembly. The sequence is that of Large ribosomal subunit protein uL13 from Citrobacter koseri (strain ATCC BAA-895 / CDC 4225-83 / SGSC4696).